The following is a 648-amino-acid chain: DNA ligase (648 aa).

NAD(+)-binding positions include 30–34 (DEEYD), 79–80 (SM), and E108. The active-site N6-AMP-lysine intermediate is K110. Residues R131, E165, K280, and K304 each contribute to the NAD(+) site. Positions 398, 401, 414, and 419 each coordinate Zn(2+). Residues 573–648 (AKENPFKGKI…LTEDEMRAML (76 aa)) enclose the BRCT domain.

This sequence belongs to the NAD-dependent DNA ligase family. LigA subfamily. Requires Mg(2+) as cofactor. Mn(2+) is required as a cofactor.

It carries out the reaction NAD(+) + (deoxyribonucleotide)n-3'-hydroxyl + 5'-phospho-(deoxyribonucleotide)m = (deoxyribonucleotide)n+m + AMP + beta-nicotinamide D-nucleotide.. DNA ligase that catalyzes the formation of phosphodiester linkages between 5'-phosphoryl and 3'-hydroxyl groups in double-stranded DNA using NAD as a coenzyme and as the energy source for the reaction. It is essential for DNA replication and repair of damaged DNA. The chain is DNA ligase from Sulfurovum sp. (strain NBC37-1).